The chain runs to 275 residues: 2-dehydro-3-deoxyphosphooctonate aldolase (275 aa).

This sequence belongs to the KdsA family.

The protein resides in the cytoplasm. The catalysed reaction is D-arabinose 5-phosphate + phosphoenolpyruvate + H2O = 3-deoxy-alpha-D-manno-2-octulosonate-8-phosphate + phosphate. It functions in the pathway carbohydrate biosynthesis; 3-deoxy-D-manno-octulosonate biosynthesis; 3-deoxy-D-manno-octulosonate from D-ribulose 5-phosphate: step 2/3. Its pathway is bacterial outer membrane biogenesis; lipopolysaccharide biosynthesis. The chain is 2-dehydro-3-deoxyphosphooctonate aldolase from Francisella philomiragia subsp. philomiragia (strain ATCC 25017 / CCUG 19701 / FSC 153 / O#319-036).